The sequence spans 223 residues: Enolase-phosphatase E1 (223 aa).

It belongs to the HAD-like hydrolase superfamily. MasA/MtnC family. As to quaternary structure, monomer. The cofactor is Mg(2+).

The catalysed reaction is 5-methylsulfanyl-2,3-dioxopentyl phosphate + H2O = 1,2-dihydroxy-5-(methylsulfanyl)pent-1-en-3-one + phosphate. It functions in the pathway amino-acid biosynthesis; L-methionine biosynthesis via salvage pathway; L-methionine from S-methyl-5-thio-alpha-D-ribose 1-phosphate: step 3/6. The protein operates within amino-acid biosynthesis; L-methionine biosynthesis via salvage pathway; L-methionine from S-methyl-5-thio-alpha-D-ribose 1-phosphate: step 4/6. Its function is as follows. Bifunctional enzyme that catalyzes the enolization of 2,3-diketo-5-methylthiopentyl-1-phosphate (DK-MTP-1-P) into the intermediate 2-hydroxy-3-keto-5-methylthiopentenyl-1-phosphate (HK-MTPenyl-1-P), which is then dephosphorylated to form the acireductone 1,2-dihydroxy-3-keto-5-methylthiopentene (DHK-MTPene). This chain is Enolase-phosphatase E1, found in Aquifex aeolicus (strain VF5).